The sequence spans 1262 residues: Structural maintenance of chromosomes protein 1 (1262 aa).

Residues 171–497 are a coiled coil; sequence SRSHEFQAEY…VAVVRQLSEA (327 aa). Residues 524 to 642 enclose the SMC hinge domain; the sequence is SVYGRLVDLC…ESQEDAKQLA (119 aa). Residues 680 to 937 adopt a coiled-coil conformation; it reads KKWDEKVVKQ…RLESLLTKKQ (258 aa). Positions 965–994 are disordered; it reads EYEEDDGDDTASQSSQSATDGPSVSEEQIQ. The span at 974-991 shows a compositional bias: polar residues; it reads TASQSSQSATDGPSVSEE. A coiled-coil region spans residues 1017–1086; the sequence is DGVRQMSNRL…QQFEKVKTDR (70 aa). The DA-box motif lies at 1148–1183; it reads LSGGEKTIAALALLFAVHGRNPAPFFVLDEIDAALD.

This sequence belongs to the SMC family. SMC1 subfamily. As to quaternary structure, component of the cohesin complex, composed of the smc-1 and smc-3 heterodimer attached via their SMC hinge domain, scc-1 which links them, and scc-3. Interacts with smc-3, scc-1, scc-3 and tim-1.

The protein resides in the nucleus. It localises to the chromosome. Its function is as follows. Involved in chromosome cohesion during cell cycle and in DNA repair. Required for chromosome segregation during mitosis. Central component of cohesin complex. The cohesin complex is required for the cohesion of sister chromatids after DNA replication. The cohesin complex apparently forms a large proteinaceous ring within which sister chromatids can be trapped. At anaphase, the complex is cleaved and dissociates from chromatin, allowing sister chromatids to segregate. The chain is Structural maintenance of chromosomes protein 1 from Caenorhabditis elegans.